The chain runs to 273 residues: Octanoyltransferase LipM (273 aa).

The BPL/LPL catalytic domain maps to 32–240 (GEIPPTLRFY…GFSEILNIEL (209 aa)). Catalysis depends on Cys-142, which acts as the Acyl-thioester intermediate.

This sequence belongs to the octanoyltransferase LipM family. Monomer.

The catalysed reaction is octanoyl-[ACP] + L-lysyl-[protein] = N(6)-octanoyl-L-lysyl-[protein] + holo-[ACP] + H(+). It functions in the pathway protein modification; protein lipoylation via endogenous pathway; protein N(6)-(lipoyl)lysine from octanoyl-[acyl-carrier-protein]. Functionally, catalyzes the transfer of endogenously produced octanoic acid from octanoyl-acyl-carrier-protein onto the lipoyl domain of GcvH, an intermediate carrier during protein lipoylation. In Oceanobacillus iheyensis (strain DSM 14371 / CIP 107618 / JCM 11309 / KCTC 3954 / HTE831), this protein is Octanoyltransferase LipM.